The primary structure comprises 356 residues: AT-hook motif nuclear-localized protein 1 (356 aa).

The interval 1-127 (MVLNMESTGE…PSHLPPPSSH (127 aa)) is disordered. Positions 49-66 (VTPPPPQPSSHHTAPPPL) are enriched in pro residues. The span at 88-97 (MKKKRGRPRK) shows a compositional bias: basic residues. A Bipartite nuclear localization signal motif is present at residues 89-97 (KKKRGRPRK). The a.T hook DNA-binding region spans 89-101 (KKKRGRPRKYGPD). A compositionally biased stretch (low complexity) spans 106–118 (ALSPKPISSAPAP). The region spanning 167–309 (GGNFTPHIIT…KHDFMLSSPT (143 aa)) is the PPC domain. The tract at residues 270-287 (GLLVAASPVQVVVGSFLA) is required for nuclear localization. Positions 295 to 302 (KPKKNKHD) match the Nuclear localization signal motif.

The protein localises to the nucleus. It is found in the nucleoplasm. The protein resides in the chromosome. Its function is as follows. Transcription factor that specifically binds AT-rich DNA sequences related to the nuclear matrix attachment regions (MARs). May play a function in the positioning of chromatin fibers within the nucleus. This Arabidopsis thaliana (Mouse-ear cress) protein is AT-hook motif nuclear-localized protein 1.